The chain runs to 325 residues: MYQNFIGQNPMLNQFNTYSQQNPNFIPFHNNQLINNNVHVANNLNNFVQQHKQLQNQMPQFQNQFQNQSMNQSMNQSMNQQINRPMNQSMNQSMNQPMNKIGNKINKSHSENKSAKNIIEEMLKPQKIVKDNKDVESSYKNRNKQHENILKKGDFSEFKLTNAPYKVIIKDKINDYVGKNIDHFKKPEQLIVHKADPKIDANTDRFNAELELKESDLEKINETLKLEFKPERYNEHKKIFEHKEVYIRNMAYEAKTFDDNKQDYIEFYRQKQKEAEEGKKLYDDIIRNIIDEGIISKDELPTENLQNEKDVDIDKIIIDMNLDYQ.

Coiled-coil stretches lie at residues 38–69 (VHVA…QNQS) and 201–229 (ANTD…LEFK).

This is an uncharacterized protein from Acanthamoeba polyphaga (Amoeba).